We begin with the raw amino-acid sequence, 205 residues long: 7-methyl-GTP pyrophosphatase (205 aa).

Residue Asp-79 is the Proton acceptor of the active site.

It belongs to the Maf family. YceF subfamily. The cofactor is a divalent metal cation.

The protein localises to the cytoplasm. The enzyme catalyses N(7)-methyl-GTP + H2O = N(7)-methyl-GMP + diphosphate + H(+). Its function is as follows. Nucleoside triphosphate pyrophosphatase that hydrolyzes 7-methyl-GTP (m(7)GTP). May have a dual role in cell division arrest and in preventing the incorporation of modified nucleotides into cellular nucleic acids. The polypeptide is 7-methyl-GTP pyrophosphatase (Paraburkholderia xenovorans (strain LB400)).